Consider the following 854-residue polypeptide: Protein translocase subunit SecA (854 aa).

ATP contacts are provided by residues Gln89, 107–111, and Asp501; that span reads GEGKT.

It belongs to the SecA family. As to quaternary structure, monomer and homodimer. Part of the essential Sec protein translocation apparatus which comprises SecA, SecYEG and auxiliary proteins SecDF-YajC and YidC.

It is found in the cell inner membrane. Its subcellular location is the cytoplasm. It catalyses the reaction ATP + H2O + cellular proteinSide 1 = ADP + phosphate + cellular proteinSide 2.. Functionally, part of the Sec protein translocase complex. Interacts with the SecYEG preprotein conducting channel. Has a central role in coupling the hydrolysis of ATP to the transfer of proteins into and across the cell membrane, serving both as a receptor for the preprotein-SecB complex and as an ATP-driven molecular motor driving the stepwise translocation of polypeptide chains across the membrane. The protein is Protein translocase subunit SecA of Pelagibacter ubique (strain HTCC1062).